Reading from the N-terminus, the 695-residue chain is DNA ligase (695 aa).

30–34 contacts NAD(+); the sequence is DADFD. Residues 52–71 are disordered; it reads TGASPTEEVAPAPPTSSPFR. NAD(+) is bound by residues 81–82 and E106; that span reads SL. The active-site N6-AMP-lysine intermediate is K108. 4 residues coordinate NAD(+): R129, E169, K285, and K309. 4 residues coordinate Zn(2+): C403, C406, C422, and C428. Residues 599 to 688 enclose the BRCT domain; the sequence is VDSALLEGLT…APSSGDDAST (90 aa). A disordered region spans residues 676-695; the sequence is ENGAPSSGDDASTSADSVDD. The segment covering 679 to 695 has biased composition (low complexity); it reads APSSGDDASTSADSVDD.

Belongs to the NAD-dependent DNA ligase family. LigA subfamily. The cofactor is Mg(2+). Mn(2+) is required as a cofactor.

The enzyme catalyses NAD(+) + (deoxyribonucleotide)n-3'-hydroxyl + 5'-phospho-(deoxyribonucleotide)m = (deoxyribonucleotide)n+m + AMP + beta-nicotinamide D-nucleotide.. Its function is as follows. DNA ligase that catalyzes the formation of phosphodiester linkages between 5'-phosphoryl and 3'-hydroxyl groups in double-stranded DNA using NAD as a coenzyme and as the energy source for the reaction. It is essential for DNA replication and repair of damaged DNA. The polypeptide is DNA ligase (Corynebacterium jeikeium (strain K411)).